We begin with the raw amino-acid sequence, 31 residues long: Cyclotide vico-B (31 aa).

The cyclopeptide (Gly-Asn) cross-link spans Gly-1–Asn-31. 3 cysteine pairs are disulfide-bonded: Cys-5–Cys-21, Cys-9–Cys-23, and Cys-14–Cys-28.

The protein belongs to the cyclotide family. Bracelet subfamily. This is a cyclic peptide.

Its function is as follows. Probably participates in a plant defense mechanism. The protein is Cyclotide vico-B of Viola cotyledon (Violeta).